The following is a 406-amino-acid chain: Putative odorant receptor 65b (406 aa).

At 1-55 the chain is on the cytoplasmic side; the sequence is MDIQRFLKFYKVGWKTYRDPLMEASHSSIYYWREQMKAMALFTTTEERLLPYRSK. Residues 56-76 traverse the membrane as a helical segment; it reads WHTLVYIQMVIFFASMSFGLT. The Extracellular portion of the chain corresponds to 77–88; it reads ESMGDHVQMGRD. The helical transmembrane segment at 89-109 threads the bilayer; the sequence is LAFILGAFFIIFKTYYFCWYG. Residues 110 to 144 lie on the Cytoplasmic side of the membrane; the sequence is DELDQVISDLDALHPWAQKGPNPVEYQTGKRWYFV. The chain crosses the membrane as a helical span at residues 145–165; sequence MAFFLATSWSFFLCILLLLLI. The Extracellular segment spans residues 166–218; the sequence is TSPMWVHQQNLPFHAAFPFQWHEKSLHPISHAIIYLFQSYFAVYCLTWLLCIE. A helical transmembrane segment spans residues 219–239; sequence GLSICIYAEITFGIEVLCLEL. The Cytoplasmic portion of the chain corresponds to 240 to 275; it reads RQIHRHNYGLQELRMETNRLVKLHQKIVEILDRTND. The helical transmembrane segment at 276–296 threads the bilayer; that stretch reads VFHGTLIMQMGVNFSLVSLSV. Residues 297 to 307 are Extracellular-facing; that stretch reads LEAVEARKDPK. Residues 308–328 form a helical membrane-spanning segment; the sequence is VVAQFAVLMLLALGHLSMWSY. Residues 329–381 are Cytoplasmic-facing; sequence CGDQLSQKSLQISEAAYEAYDPTKGSKDVYRDLCVIIRRGQDPLIMRASPFPS. The helical transmembrane segment at 382–402 threads the bilayer; the sequence is FNLINYSAILNQCYGILTFLL. At 403–406 the chain is on the extracellular side; that stretch reads KTLD.

It belongs to the insect chemoreceptor superfamily. Heteromeric odorant receptor channel (TC 1.A.69) family. Or49a subfamily. Interacts with Orco. Complexes exist early in the endomembrane system in olfactory sensory neurons (OSNs), coupling these complexes to the conserved ciliary trafficking pathway.

The protein resides in the cell membrane. In terms of biological role, odorant receptor which mediates acceptance or avoidance behavior, depending on its substrates. The odorant receptor repertoire encodes a large collection of odor stimuli that vary widely in identity, intensity, and duration. May form a complex with Orco to form odorant-sensing units, providing sensitive and prolonged odorant signaling and calcium permeability. The sequence is that of Putative odorant receptor 65b (Or65b) from Drosophila melanogaster (Fruit fly).